The sequence spans 303 residues: UDP-3-O-acyl-N-acetylglucosamine deacetylase (303 aa).

Residues His78, His237, and Asp241 each coordinate Zn(2+). His264 (proton donor) is an active-site residue.

It belongs to the LpxC family. Zn(2+) is required as a cofactor.

It carries out the reaction a UDP-3-O-[(3R)-3-hydroxyacyl]-N-acetyl-alpha-D-glucosamine + H2O = a UDP-3-O-[(3R)-3-hydroxyacyl]-alpha-D-glucosamine + acetate. It functions in the pathway glycolipid biosynthesis; lipid IV(A) biosynthesis; lipid IV(A) from (3R)-3-hydroxytetradecanoyl-[acyl-carrier-protein] and UDP-N-acetyl-alpha-D-glucosamine: step 2/6. Functionally, catalyzes the hydrolysis of UDP-3-O-myristoyl-N-acetylglucosamine to form UDP-3-O-myristoylglucosamine and acetate, the committed step in lipid A biosynthesis. This is UDP-3-O-acyl-N-acetylglucosamine deacetylase from Xanthomonas campestris pv. campestris (strain B100).